The chain runs to 152 residues: Protein SprT-like (152 aa).

A SprT-like domain is found at 7-148 (QRLVEEVSLQ…GKCKGKLNLI (142 aa)). H67 lines the Zn(2+) pocket. E68 is a catalytic residue. H71 contacts Zn(2+).

This sequence belongs to the SprT family. It depends on Zn(2+) as a cofactor.

It is found in the cytoplasm. The polypeptide is Protein SprT-like (Bacillus anthracis (strain A0248)).